Here is a 586-residue protein sequence, read N- to C-terminus: Serine/threonine-protein phosphatase 2A 56 kDa regulatory subunit delta isoform (586 aa).

The interval 1–80 is disordered; the sequence is MSPSPSSSGK…QSSSRFNLSK (80 aa). Repeat copies occupy residues 21–22, 23–24, 25–26, 27–28, 29–30, and 31–32. The segment at 21–36 is 8 X 2 AA approximate tandem repeats of Q-P; that stretch reads QPQPQPQPQPQPQSQP. A compositionally biased stretch (pro residues) spans 23 to 35; it reads QPQPQPQPQPQSQ. One copy of the 7; approximate repeat lies at 33-34; the sequence is QS. Repeat 8 spans residues 35 to 36; it reads QP. Positions 36–45 are enriched in low complexity; the sequence is PPSSNKRPSN. At threonine 47 the chain carries Phosphothreonine. Serine 72, serine 73, and serine 74 each carry phosphoserine. Residues 507 to 514 carry the SH3-binding; class I motif; the sequence is RAPPPLPP. Residues 532–549 carry the Nuclear localization signal motif; sequence KRTVETEAVQMLKDIKKE. Phosphoserine occurs at positions 557 and 582.

The protein belongs to the phosphatase 2A regulatory subunit B56 family. As to quaternary structure, PP2A consists of a common heterodimeric core enzyme, composed of a 36 kDa catalytic subunit (subunit C) and a 65 kDa constant regulatory subunit (PR65 or subunit A), that associates with a variety of regulatory subunits. Proteins that associate with the core dimer include three families of regulatory subunits B (the R2/B/PR55/B55, R3/B''/PR72/PR130/PR59 and R5/B'/B56 families), the 48 kDa variable regulatory subunit, viral proteins, and cell signaling molecules. Interacts with the PP2A A subunit PPP2R1A. Interacts with SGO1. Interacts with ADCY8. In terms of tissue distribution, highly expressed in brain.

It localises to the nucleus. In terms of biological role, the B regulatory subunit might modulate substrate selectivity and catalytic activity, and might also direct the localization of the catalytic enzyme to a particular subcellular compartment. This Oryctolagus cuniculus (Rabbit) protein is Serine/threonine-protein phosphatase 2A 56 kDa regulatory subunit delta isoform (PPP2R5D).